A 372-amino-acid polypeptide reads, in one-letter code: Ephrin type-A receptor 8 (372 aa).

The Protein kinase domain maps to 2 to 263 (IHIEKIIGSG…HVVSVLEALV (262 aa)). ATP is bound by residues 8 to 16 (IGSGESGEV) and Lys34. Asp127 acts as the Proton acceptor in catalysis. Tyr206 is subject to Phosphotyrosine; by autocatalysis. The 76-residue stretch at 297 to 372 (NGDLTVGDWL…SCTQGPRRHL (76 aa)) folds into the SAM domain. Positions 370-372 (RHL) match the PDZ-binding motif.

In terms of assembly, heterotetramer upon binding of the ligand. The heterotetramer is composed of an ephrin dimer and a receptor dimer. Oligomerization is probably required to induce biological responses. May also form heterodimers with other ephrin receptors. Interacts with FYN; possible downstream effector of EPHA8 in regulation of cell adhesion. Interacts with PIK3CG; regulates integrin-mediated cell adhesion to substrate. Interacts with TIAM1; regulates clathrin-mediated endocytosis of EPHA8. Interacts with ANKS1A and ANKS1B; EPHA8 kinase activity-independent but stimulated by EPHA8 ubiquitination. Phosphorylated. Phosphorylation is stimulated upon binding of its ligands including EFNA2, EFNA3 and EFNA5. Autophosphorylation on Tyr-206 modulates tyrosine kinase activity. In terms of processing, ubiquitinated. Ubiquitination by CBL regulates the receptor stability and activity through proteasomal degradation. ANKS1A prevents ubiquitination and degradation. Most abundant in brain.

Its subcellular location is the cell membrane. The protein resides in the cell projection. The protein localises to the early endosome membrane. The catalysed reaction is L-tyrosyl-[protein] + ATP = O-phospho-L-tyrosyl-[protein] + ADP + H(+). Receptor tyrosine kinase which binds promiscuously GPI-anchored ephrin-A family ligands residing on adjacent cells, leading to contact-dependent bidirectional signaling into neighboring cells. The signaling pathway downstream of the receptor is referred to as forward signaling while the signaling pathway downstream of the ephrin ligand is referred to as reverse signaling. The GPI-anchored ephrin-A EFNA2, EFNA3, and EFNA5 are able to activate EPHA8 through phosphorylation. With EFNA5 may regulate integrin-mediated cell adhesion and migration on fibronectin substrate but also neurite outgrowth. During development of the nervous system also plays a role in axon guidance. Downstream effectors of the EPHA8 signaling pathway include FYN which promotes cell adhesion upon activation by EPHA8 and the MAP kinases in the stimulation of neurite outgrowth. The polypeptide is Ephrin type-A receptor 8 (Epha8) (Rattus norvegicus (Rat)).